The sequence spans 237 residues: Platelet-aggregating proteinase PA-BJ (237 aa).

A propeptide spanning residues 1–5 (NSLVI) is cleaved from the precursor. The 224-residue stretch at 6 to 229 (VVGGRPCKIN…YLPWIESIIA (224 aa)) folds into the Peptidase S1 domain. Disulfide bonds link cysteine 12-cysteine 144, cysteine 31-cysteine 47, cysteine 79-cysteine 236, cysteine 123-cysteine 191, cysteine 155-cysteine 170, and cysteine 181-cysteine 205. Asparagine 25 carries an N-linked (GlcNAc...) asparagine glycan. Serine 28 carries O-linked (GalNAc...) serine glycosylation. Residues histidine 46 and aspartate 91 each act as charge relay system in the active site. Serine 185 serves as the catalytic Charge relay system.

Belongs to the peptidase S1 family. Snake venom subfamily. Monomer. As to expression, expressed by the venom gland.

It localises to the secreted. Inhibited by PMSF. The amidolytic activity is also inhibited by benzamidine derivatives. Functionally, snake venom serine protease that induces platelet aggregation through activation of protease-activated platelet receptors (PAR1/F2R and PAR4/F2RL3). On F2R, the cleavage occurs at Arg41-Ser42 (like thrombin cleavage), and Arg46-Asn47. In normal condition of hemostasis, the cleavage of the Arg41-Ser42 bond liberates a new N-terminus that functions as an agonist. However after envenomation, the cleavage of Arg46-Asn47 bond degrades this potential agonist. This may explain why the snake protease is less potent than thrombin in causing platelet aggregation and release reaction. On F2RL3, a thrombin-like activity has also been proven by calcium release from lung fibroblasts transfected with this receptor. Possesses amidolytic activities. The chain is Platelet-aggregating proteinase PA-BJ from Bothrops jararaca (Jararaca).